We begin with the raw amino-acid sequence, 487 residues long: Phenylalanine--tRNA ligase alpha subunit (487 aa).

Residues threonine 319, 361 to 363, and tyrosine 401 contribute to the L-phenylalanine site; that span reads QVE. Glutamate 403 is a Mg(2+) binding site. An L-phenylalanine-binding site is contributed by phenylalanine 427.

The protein belongs to the class-II aminoacyl-tRNA synthetase family. Phe-tRNA synthetase alpha subunit type 2 subfamily. In terms of assembly, tetramer of two alpha and two beta subunits. Mg(2+) serves as cofactor.

The protein localises to the cytoplasm. The catalysed reaction is tRNA(Phe) + L-phenylalanine + ATP = L-phenylalanyl-tRNA(Phe) + AMP + diphosphate + H(+). The protein is Phenylalanine--tRNA ligase alpha subunit (phesA) of Dictyostelium discoideum (Social amoeba).